A 144-amino-acid polypeptide reads, in one-letter code: Large ribosomal subunit protein uL15 (144 aa).

Residues 1–52 (MYLNTISPMKKSNHSSKRKGRGIGSGKGKTSGRGHKGQRSRSGGKVRRGFEG) are disordered. Basic residues-rich tracts occupy residues 11–21 (KSNHSSKRKGR) and 30–47 (TSGR…GKVR).

Belongs to the universal ribosomal protein uL15 family. In terms of assembly, part of the 50S ribosomal subunit.

Its function is as follows. Binds to the 23S rRNA. The protein is Large ribosomal subunit protein uL15 of Wigglesworthia glossinidia brevipalpis.